Consider the following 448-residue polypeptide: Glucose-6-phosphate isomerase (448 aa).

Glu291 (proton donor) is an active-site residue. Active-site residues include His312 and Lys425.

It belongs to the GPI family.

Its subcellular location is the cytoplasm. It catalyses the reaction alpha-D-glucose 6-phosphate = beta-D-fructose 6-phosphate. The protein operates within carbohydrate biosynthesis; gluconeogenesis. Its pathway is carbohydrate degradation; glycolysis; D-glyceraldehyde 3-phosphate and glycerone phosphate from D-glucose: step 2/4. Catalyzes the reversible isomerization of glucose-6-phosphate to fructose-6-phosphate. The protein is Glucose-6-phosphate isomerase of Symbiobacterium thermophilum (strain DSM 24528 / JCM 14929 / IAM 14863 / T).